The primary structure comprises 109 residues: Thiosulfate sulfurtransferase GlpE (109 aa).

Residues 17–105 (KEGKTALVDI…WARSYPQDIT (89 aa)) form the Rhodanese domain. Cys65 functions as the Cysteine persulfide intermediate in the catalytic mechanism.

This sequence belongs to the GlpE family.

Its subcellular location is the cytoplasm. It catalyses the reaction thiosulfate + hydrogen cyanide = thiocyanate + sulfite + 2 H(+). The enzyme catalyses thiosulfate + [thioredoxin]-dithiol = [thioredoxin]-disulfide + hydrogen sulfide + sulfite + 2 H(+). Functionally, transferase that catalyzes the transfer of sulfur from thiosulfate to thiophilic acceptors such as cyanide or dithiols. May function in a CysM-independent thiosulfate assimilation pathway by catalyzing the conversion of thiosulfate to sulfite, which can then be used for L-cysteine biosynthesis. The chain is Thiosulfate sulfurtransferase GlpE from Yersinia pestis bv. Antiqua (strain Antiqua).